We begin with the raw amino-acid sequence, 64 residues long: Translational regulator CsrA (64 aa).

This sequence belongs to the CsrA/RsmA family. In terms of assembly, homodimer; the beta-strands of each monomer intercalate to form a hydrophobic core, while the alpha-helices form wings that extend away from the core.

It localises to the cytoplasm. A key translational regulator that binds mRNA to regulate translation initiation and/or mRNA stability. Mediates global changes in gene expression, shifting from rapid growth to stress survival by linking envelope stress, the stringent response and the catabolite repression systems. Usually binds in the 5'-UTR; binding at or near the Shine-Dalgarno sequence prevents ribosome-binding, repressing translation, binding elsewhere in the 5'-UTR can activate translation and/or stabilize the mRNA. Its function is antagonized by small RNA(s). The sequence is that of Translational regulator CsrA from Methylococcus capsulatus (strain ATCC 33009 / NCIMB 11132 / Bath).